The sequence spans 775 residues: Acylamino-acid-releasing enzyme 1 (775 aa).

Residues serine 627, aspartate 718, and histidine 750 each act as charge relay system in the active site.

This sequence belongs to the peptidase S9C family. Homotetramer.

The protein resides in the cytoplasm. The catalysed reaction is Cleavage of an N-acetyl or N-formyl amino acid from the N-terminus of a polypeptide.. Functionally, catalyzes the hydrolysis of the N-terminal peptide bond of an N-acetylated peptide to generate an N-acetylated amino acid and a peptide with a free N-terminus. In Oryza sativa subsp. japonica (Rice), this protein is Acylamino-acid-releasing enzyme 1.